Here is a 347-residue protein sequence, read N- to C-terminus: Quinolinate synthase (347 aa).

Residues His-47 and Ser-68 each coordinate iminosuccinate. Cys-113 contacts [4Fe-4S] cluster. Residues 139–141 (YAN) and Ser-156 contribute to the iminosuccinate site. A [4Fe-4S] cluster-binding site is contributed by Cys-200. Residues 226-228 (HPE) and Thr-243 each bind iminosuccinate. A [4Fe-4S] cluster-binding site is contributed by Cys-297.

It belongs to the quinolinate synthase family. Type 1 subfamily. [4Fe-4S] cluster serves as cofactor.

The protein localises to the cytoplasm. It carries out the reaction iminosuccinate + dihydroxyacetone phosphate = quinolinate + phosphate + 2 H2O + H(+). It functions in the pathway cofactor biosynthesis; NAD(+) biosynthesis; quinolinate from iminoaspartate: step 1/1. Its function is as follows. Catalyzes the condensation of iminoaspartate with dihydroxyacetone phosphate to form quinolinate. The protein is Quinolinate synthase of Salmonella choleraesuis (strain SC-B67).